Consider the following 197-residue polypeptide: Inner membrane protein RclC (197 aa).

Residues 1–15 lie on the Periplasmic side of the membrane; sequence MEKYLHLLSRGDKIG. Residues 16 to 36 traverse the membrane as a helical segment; that stretch reads LTLIRLSIAIVFMWIGLLKFV. Residues 37-85 are Cytoplasmic-facing; it reads PYEADSITPFVANSPLMSFFYEHPEDYKQYLTHEGEYKPEARAWQTANN. The helical transmembrane segment at 86–106 threads the bilayer; that stretch reads TYGFSNGLGVVEVIIALLVLA. The Periplasmic segment spans residues 107–112; the sequence is NPVNRW. The chain crosses the membrane as a helical span at residues 113-133; the sequence is LGLLGGLMAFTTPLVTLSFLI. Over 134-197 the chain is Cytoplasmic; sequence TTPEAWVPAL…ESSSTLKTEY (64 aa).

It localises to the cell inner membrane. Functionally, probably involved in reactive chlorine species (RCS) stress resistance. This chain is Inner membrane protein RclC (rclC), found in Escherichia coli (strain K12).